The primary structure comprises 168 residues: 3'-5' exoribonuclease MT2234.1 (168 aa).

Aspartate 6 provides a ligand contact to Mg(2+). The interval 6 to 9 is RNA binding; the sequence is DTEF.

In terms of assembly, homodimer. Mg(2+) serves as cofactor.

In terms of biological role, exonuclease that cleaves single-stranded 3' overhangs of double-stranded RNA. This Mycobacterium tuberculosis (strain CDC 1551 / Oshkosh) protein is 3'-5' exoribonuclease MT2234.1.